A 286-amino-acid chain; its full sequence is ATP synthase gamma chain (286 aa).

It belongs to the ATPase gamma chain family. F-type ATPases have 2 components, CF(1) - the catalytic core - and CF(0) - the membrane proton channel. CF(1) has five subunits: alpha(3), beta(3), gamma(1), delta(1), epsilon(1). CF(0) has three main subunits: a, b and c.

The protein localises to the cell inner membrane. Its function is as follows. Produces ATP from ADP in the presence of a proton gradient across the membrane. The gamma chain is believed to be important in regulating ATPase activity and the flow of protons through the CF(0) complex. The sequence is that of ATP synthase gamma chain from Pseudomonas aeruginosa (strain UCBPP-PA14).